Consider the following 255-residue polypeptide: Small ribosomal subunit protein uS2 (255 aa).

The segment at 231–255 (RLQTGAEEEFSTEGEEVVEETPAEA) is disordered. Acidic residues predominate over residues 236 to 255 (AEEEFSTEGEEVVEETPAEA).

It belongs to the universal ribosomal protein uS2 family.

The chain is Small ribosomal subunit protein uS2 from Geobacter sp. (strain M21).